Here is a 205-residue protein sequence, read N- to C-terminus: Peptidyl-tRNA hydrolase (205 aa).

Y17 is a tRNA binding site. H22 serves as the catalytic Proton acceptor. TRNA contacts are provided by Y73 and N75.

Belongs to the PTH family. In terms of assembly, monomer.

The protein localises to the cytoplasm. It carries out the reaction an N-acyl-L-alpha-aminoacyl-tRNA + H2O = an N-acyl-L-amino acid + a tRNA + H(+). In terms of biological role, hydrolyzes ribosome-free peptidyl-tRNAs (with 1 or more amino acids incorporated), which drop off the ribosome during protein synthesis, or as a result of ribosome stalling. Functionally, catalyzes the release of premature peptidyl moieties from peptidyl-tRNA molecules trapped in stalled 50S ribosomal subunits, and thus maintains levels of free tRNAs and 50S ribosomes. The polypeptide is Peptidyl-tRNA hydrolase (Maridesulfovibrio salexigens (strain ATCC 14822 / DSM 2638 / NCIMB 8403 / VKM B-1763) (Desulfovibrio salexigens)).